A 202-amino-acid chain; its full sequence is Ribonuclease HII (202 aa).

The RNase H type-2 domain maps to 14 to 202 (LPLAGVDEAG…VAQFSLFPAA (189 aa)). Positions 20, 21, and 111 each coordinate a divalent metal cation.

Belongs to the RNase HII family. Requires Mn(2+) as cofactor. It depends on Mg(2+) as a cofactor.

The protein resides in the cytoplasm. It carries out the reaction Endonucleolytic cleavage to 5'-phosphomonoester.. In terms of biological role, endonuclease that specifically degrades the RNA of RNA-DNA hybrids. The sequence is that of Ribonuclease HII from Rhizorhabdus wittichii (strain DSM 6014 / CCUG 31198 / JCM 15750 / NBRC 105917 / EY 4224 / RW1) (Sphingomonas wittichii).